The sequence spans 347 residues: Merozoite surface protein P12 (347 aa).

The or 25 signal peptide spans 1-23 (MIKLSKKYCLGISFVLYILLSVC). 6-Cys domains lie at 27–172 (KNLT…IPSL) and 175–305 (KVKG…ISSS). N-linked (GlcNAc...) asparagine glycosylation occurs at Asn28. Intrachain disulfides connect Cys31-Cys53, Cys67-Cys138, and Cys81-Cys136. N-linked (GlcNAc...) asparagine glycosylation is found at Asn147, Asn200, Asn228, Asn242, Asn265, and Asn322. 3 cysteine pairs are disulfide-bonded: Cys179-Cys211, Cys225-Cys286, and Cys236-Cys284. Asn322 carries GPI-anchor amidated asparagine lipidation. A propeptide spans 323 to 347 (SSFLTLSSYCAFITFIITSFLSFIL) (removed in mature form).

As to quaternary structure, heterodimer; heterodimerizes with PF41. May form an antiparallel heterodimer with PF41.

It is found in the cell surface. Its subcellular location is the cell membrane. In Plasmodium falciparum, this protein is Merozoite surface protein P12 (PF12).